The following is a 344-amino-acid chain: Small neutral protease regulatory protein (344 aa).

The region spanning 1 to 60 is the HTH lysR-type domain; that stretch reads MELEVRHLRALCAIADAGSLHRAARRLGVAQPTLSTQLTRIEQALGGPLFTRERTGCRPT. Positions 20–39 form a DNA-binding region, H-T-H motif; it reads LHRAARRLGVAQPTLSTQLT. The segment at 322–344 is disordered; that stretch reads SCGRAEGSRSRRPRDVAPPRPIG. Over residues 327–338 the composition is skewed to basic and acidic residues; that stretch reads EGSRSRRPRDVA.

It belongs to the LysR transcriptional regulatory family.

Functionally, transcriptional activator of the gene (snpA) for the small neutral protease. This is Small neutral protease regulatory protein (mprR) from Streptomyces lividans.